A 132-amino-acid polypeptide reads, in one-letter code: Small ribosomal subunit protein uS8c (132 aa).

This sequence belongs to the universal ribosomal protein uS8 family. In terms of assembly, part of the 30S ribosomal subunit.

It is found in the plastid. Its subcellular location is the chloroplast. In terms of biological role, one of the primary rRNA binding proteins, it binds directly to 16S rRNA central domain where it helps coordinate assembly of the platform of the 30S subunit. This is Small ribosomal subunit protein uS8c (rps8) from Pinus thunbergii (Japanese black pine).